The chain runs to 313 residues: Aspartate carbamoyltransferase catalytic subunit (313 aa).

Carbamoyl phosphate is bound by residues arginine 58 and threonine 59. Lysine 86 lines the L-aspartate pocket. Carbamoyl phosphate-binding residues include arginine 108, histidine 136, and glutamine 139. L-aspartate contacts are provided by arginine 169 and arginine 223. Residues glycine 265 and proline 266 each coordinate carbamoyl phosphate.

This sequence belongs to the aspartate/ornithine carbamoyltransferase superfamily. ATCase family. In terms of assembly, heterododecamer (2C3:3R2) of six catalytic PyrB chains organized as two trimers (C3), and six regulatory PyrI chains organized as three dimers (R2).

It catalyses the reaction carbamoyl phosphate + L-aspartate = N-carbamoyl-L-aspartate + phosphate + H(+). Its pathway is pyrimidine metabolism; UMP biosynthesis via de novo pathway; (S)-dihydroorotate from bicarbonate: step 2/3. Its function is as follows. Catalyzes the condensation of carbamoyl phosphate and aspartate to form carbamoyl aspartate and inorganic phosphate, the committed step in the de novo pyrimidine nucleotide biosynthesis pathway. The chain is Aspartate carbamoyltransferase catalytic subunit from Anaeromyxobacter dehalogenans (strain 2CP-C).